The chain runs to 489 residues: Phosphoenolpyruvate carboxykinase (ATP) (489 aa).

Residues Arg53 and Tyr159 each contribute to the substrate site. ATP contacts are provided by residues His185, 208-216 (GLSGTGKTT), Asp258, Arg300, 409-410 (KI), and Ser415. Arg300 is a binding site for substrate.

This sequence belongs to the phosphoenolpyruvate carboxykinase (ATP) family.

The protein resides in the cytoplasm. It catalyses the reaction oxaloacetate + ATP = phosphoenolpyruvate + ADP + CO2. It participates in carbohydrate biosynthesis; gluconeogenesis. Its function is as follows. Involved in the gluconeogenesis. Catalyzes the conversion of oxaloacetate (OAA) to phosphoenolpyruvate (PEP) through direct phosphoryl transfer between the nucleoside triphosphate and OAA. The chain is Phosphoenolpyruvate carboxykinase (ATP) from Aeropyrum pernix (strain ATCC 700893 / DSM 11879 / JCM 9820 / NBRC 100138 / K1).